The primary structure comprises 431 residues: Glutamyl-tRNA reductase (431 aa).

Substrate is bound by residues 49-52 (TCNR), S109, 114-116 (EGQ), and Q120. The active-site Nucleophile is C50. 189–194 (GAGKMS) provides a ligand contact to NADP(+).

It belongs to the glutamyl-tRNA reductase family. As to quaternary structure, homodimer.

It catalyses the reaction (S)-4-amino-5-oxopentanoate + tRNA(Glu) + NADP(+) = L-glutamyl-tRNA(Glu) + NADPH + H(+). It participates in porphyrin-containing compound metabolism; protoporphyrin-IX biosynthesis; 5-aminolevulinate from L-glutamyl-tRNA(Glu): step 1/2. Its pathway is porphyrin-containing compound metabolism; chlorophyll biosynthesis. Catalyzes the NADPH-dependent reduction of glutamyl-tRNA(Glu) to glutamate 1-semialdehyde (GSA). This chain is Glutamyl-tRNA reductase, found in Trichodesmium erythraeum (strain IMS101).